A 479-amino-acid polypeptide reads, in one-letter code: uncharacterized protein (479 aa).

Helical transmembrane passes span 25–45, 63–83, 110–130, 133–153, 175–195, 229–249, 287–307, and 328–348; these read VVFVAIMGYLLFKNLLFLFFF, IAMIIAVAVSIVLVLMALAGG, LFGPIVGIFSAATIDFLTVIF, GVFNVGYVLGAILTGMIAGIL, VLSIGMVIAAFLITQFFVLGI, ILLYFTIAIVIAMLVLYIVWL, LILNVITLASTSLLMINIAFI, and LFAPVIFLLDIIVIYPILLLL.

It in the C-terminal section; belongs to the GatC family.

The protein resides in the cell membrane. This is an uncharacterized protein from Mycoplasma pneumoniae (strain ATCC 29342 / M129 / Subtype 1) (Mycoplasmoides pneumoniae).